Here is a 111-residue protein sequence, read N- to C-terminus: Disintegrin piscivostatin-alpha (111 aa).

The signal sequence occupies residues 1–20 (MIQVLLVTICLAVFPYQGSS). Positions 21-44 (IILESGNVNDYEVVYPRKITPLPK) are excised as a propeptide. Positions 45 to 111 (GAVQPKNPCC…GDCPRKHFYA (67 aa)) constitute a Disintegrin domain. Disulfide bonds link Cys53/Cys76, Cys67/Cys73, Cys72/Cys97, and Cys85/Cys104. The Cell attachment site signature appears at 89-91 (RGD). Residues 110 to 111 (YA) constitute a propeptide that is removed on maturation.

This sequence belongs to the disintegrin family. Dimeric disintegrin subfamily. As to quaternary structure, heterodimer with piscivostatin-beta; disulfide-linked. As to expression, expressed by the venom gland.

It is found in the secreted. Functionally, inhibits fibrinogen interaction with platelets. Acts by binding to alpha-IIb/beta-3 (ITGA2B/ITGB3) on the platelet surface and inhibits both ADP-induced platelet aggregation and platelet aggregate dissociation in human platelet-rich plasma. The chain is Disintegrin piscivostatin-alpha from Agkistrodon piscivorus piscivorus (Eastern cottonmouth).